A 306-amino-acid chain; its full sequence is Acetyl-coenzyme A carboxylase carboxyl transferase subunit beta (306 aa).

One can recognise a CoA carboxyltransferase N-terminal domain in the interval 25–294; that stretch reads LWIKDPTSGE…APEPSHAFSK (270 aa). Residues 287–306 form a disordered region; it reads EPSHAFSKDSQTQISKTKAA. The span at 294-306 shows a compositional bias: polar residues; sequence KDSQTQISKTKAA.

The protein belongs to the AccD/PCCB family. In terms of assembly, acetyl-CoA carboxylase is a heterohexamer composed of biotin carboxyl carrier protein (AccB), biotin carboxylase (AccC) and two subunits each of ACCase subunit alpha (AccA) and ACCase subunit beta (AccD).

It localises to the cytoplasm. It catalyses the reaction N(6)-carboxybiotinyl-L-lysyl-[protein] + acetyl-CoA = N(6)-biotinyl-L-lysyl-[protein] + malonyl-CoA. It participates in lipid metabolism; malonyl-CoA biosynthesis; malonyl-CoA from acetyl-CoA: step 1/1. Functionally, component of the acetyl coenzyme A carboxylase (ACC) complex. Biotin carboxylase (BC) catalyzes the carboxylation of biotin on its carrier protein (BCCP) and then the CO(2) group is transferred by the transcarboxylase to acetyl-CoA to form malonyl-CoA. This Bartonella bacilliformis (strain ATCC 35685 / KC583 / Herrer 020/F12,63) protein is Acetyl-coenzyme A carboxylase carboxyl transferase subunit beta.